Reading from the N-terminus, the 177-residue chain is B-phycoerythrin beta chain (177 aa).

Phycourobilin contacts are provided by cysteine 50 and cysteine 61. An N4-methylasparagine modification is found at asparagine 72. 2 residues coordinate (2R,3E)-phycoerythrobilin: cysteine 82 and cysteine 158.

Belongs to the phycobiliprotein family. Heteromer of 6 alpha, 6 beta and one gamma chain. In terms of processing, contains two covalently linked phycoerythrobilin chromophores and one covalently linked phycourobilin chromophore.

Its subcellular location is the plastid. The protein resides in the chloroplast thylakoid membrane. Functionally, light-harvesting photosynthetic bile pigment-protein from the phycobiliprotein complex. In Rhodella violacea (Red alga), this protein is B-phycoerythrin beta chain (cpeB).